The primary structure comprises 501 residues: MFSLQDICRKHLFQVPDAFDEYILQALGLYWEKHGSLQRIRKDAVFVQRNLTISTNEALRIAASEGNERVINLLLSWEGNFHYVIIGALEGNRYDLIHKYGSQIKDYHMILSSIQNANTFEKCHELSNCDMWCLIDNAIKYNMLSILQKHRNFLTEELENQEFFETACEEQKYDIVLWMGQTLLLDEPKFIFDTAFKMVDFSLLTIGYSLLFDNKMDIQDDLTSLLTEHLEIAAAKGQLYFMLETLKHGGDVNFEVLSKAVENDHRKILDYFIRRQQYLSREDIENLLLSAITNCASKKTLNLLLSYLNYSIKNITEKIVQHVIKGGDYTIIILLKKKKINLVEPVLTGFIDHYYGNCFIENFIREFAIRPEKVIKMAARKGKLNMIIEFLNEKYVHKDDLGTIFKLLKNLVCTMKHKKGKETLLILIHEIYRAIHLDTKEKFKLLRFYVMHDATIQFLSMCKDCFNLAGFKPFVLECLDIAIKKNHPNMIENIEILSKYE.

Belongs to the asfivirus MGF 505 family.

Its function is as follows. Plays a role in virus cell tropism, and may be required for efficient virus replication in macrophages. This chain is Protein MGF 505-4R, found in African swine fever virus (isolate Tick/South Africa/Pretoriuskop Pr4/1996) (ASFV).